The chain runs to 624 residues: DNA mismatch repair protein MutL (624 aa).

This sequence belongs to the DNA mismatch repair MutL/HexB family.

Its function is as follows. This protein is involved in the repair of mismatches in DNA. It is required for dam-dependent methyl-directed DNA mismatch repair. May act as a 'molecular matchmaker', a protein that promotes the formation of a stable complex between two or more DNA-binding proteins in an ATP-dependent manner without itself being part of a final effector complex. The protein is DNA mismatch repair protein MutL of Chlorobium phaeobacteroides (strain DSM 266 / SMG 266 / 2430).